A 100-amino-acid polypeptide reads, in one-letter code: Ubiquitin-related modifier 1 homolog (100 aa).

A 1-thioglycine modification is found at Gly100. A Glycyl lysine isopeptide (Gly-Lys) (interchain with K-? in acceptor proteins) cross-link involves residue Gly100.

This sequence belongs to the URM1 family. Post-translationally, C-terminal thiocarboxylation occurs in 2 steps, it is first acyl-adenylated (-COAMP) via the hesA/moeB/thiF part of the MOCS3 homolog, then thiocarboxylated (-COSH) via the rhodanese domain of the MOCS3 homolog.

It is found in the cytoplasm. Its pathway is tRNA modification; 5-methoxycarbonylmethyl-2-thiouridine-tRNA biosynthesis. Its function is as follows. Acts as a sulfur carrier required for 2-thiolation of mcm(5)S(2)U at tRNA wobble positions of cytosolic tRNA(Lys), tRNA(Glu) and tRNA(Gln). Serves as sulfur donor in tRNA 2-thiolation reaction by being thiocarboxylated (-COSH) at its C-terminus by MOCS3. The sulfur is then transferred to tRNA to form 2-thiolation of mcm(5)S(2)U. Also acts as a ubiquitin-like protein (UBL) that is covalently conjugated via an isopeptide bond to lysine residues of target proteins. The thiocarboxylated form serves as substrate for conjugation and oxidative stress specifically induces the formation of UBL-protein conjugates. This chain is Ubiquitin-related modifier 1 homolog, found in Caenorhabditis elegans.